The following is a 440-amino-acid chain: MSFFKWVSFVLILHLLNPTLISCSSNGLSQIPSKFLTLAKRNDFFDWMVGIRRRIHENPELGYEEVETSKLVRAELEKMGVSYKYPVAVTGVVGYVGTGHAPFVALRADMDALAMQEMVEWEHKSKVPGKMHACGHDAHTTMLLGAAKLLKEHEEELQGTVVLVFQPAEEGGGGAKKIVEAGVLENVSAIFGLHVTNQLALGQVSSREGPMLAGSGFFKAKISGKGGHAALPQHTIDPILAASNVIVSLQHLVSREADPLDSQVVTVAKFEGGGAFNVIPDSVTIGGTFRAFSTKSFMQLKKRIEQVITRQASVNMCNATVDFIEEEKPFFPPTVNDKALHQFFKNVSGDMLGIENYVEMQPLMGSEDFSFYQQAIPGHFSFVGMQNKARSPMASPHSPYFEVNEELLPYGASLHASMATRYLLELKASTLNKSNKKDEL.

A signal peptide spans 1-23 (MSFFKWVSFVLILHLLNPTLISC). Mn(2+)-binding residues include Cys134, His136, Glu170, His194, and His397. The Prevents secretion from ER motif lies at 437–440 (KDEL).

Belongs to the peptidase M20 family. The cofactor is Mn(2+). Expressed in leaves, stems, roots, siliques and flowers. Detected in the vascular tissue of cotyledons and roots, in adult leaves, stems, siliques, petals, hydathodes and in silique abscission zones and funicles.

It is found in the endoplasmic reticulum lumen. The catalysed reaction is a jasmonyl-L-amino acid + H2O = a jasmonate + an L-alpha-amino acid. Functionally, hydrolyzes certain amino acid conjugates of the plant growth regulator indole-3-acetic acid (IAA), including IAA-Ala, IAA-Asn, IAA-Cys, IAA-Glu, IAA-Met, IAA-Ser and IAA-Gly. Has a lower efficiency with IAA-Phe, IAA-Leu and IAA-Val and no activity with IAA-Ile. Important for IAA-Leu hydrolysis in roots. Also hydrolyzes amino acid conjugates of jasmonic acid and 12-hydroxy jasmonic acid. In Arabidopsis thaliana (Mouse-ear cress), this protein is IAA-amino acid hydrolase ILR1-like 4.